The chain runs to 339 residues: Cullin-associated NEDD8-dissociated protein 1, N-terminal part (339 aa).

HEAT repeat units follow at residues 5 to 42 (HTIQ…NPCS) and 50 to 87 (ASAT…RLPL).

As to quaternary structure, interacts with candA-C. Interacts with unneddylated cullins culA and culD; interaction occurs only when complexed with candA-C.

The protein resides in the nucleus. Functionally, assembly factor of SCF (SKP1-CUL1-F-box protein) E3 ubiquitin ligase complexes that promotes the exchange of the substrate-recognition F-box subunit in SCF complexes, thereby playing a key role in the cellular repertoire of SCF complexes. Acts as a F-box protein exchange factor when interacting with candA-C. In Emericella nidulans (strain FGSC A4 / ATCC 38163 / CBS 112.46 / NRRL 194 / M139) (Aspergillus nidulans), this protein is Cullin-associated NEDD8-dissociated protein 1, N-terminal part (candA-N).